The following is a 307-amino-acid chain: 4-hydroxy-3-methylbut-2-enyl diphosphate reductase (307 aa).

Cys13 serves as a coordination point for [4Fe-4S] cluster. (2E)-4-hydroxy-3-methylbut-2-enyl diphosphate is bound by residues His42 and His75. Residues His42 and His75 each coordinate dimethylallyl diphosphate. Positions 42 and 75 each coordinate isopentenyl diphosphate. Residue Cys97 participates in [4Fe-4S] cluster binding. Residue His125 coordinates (2E)-4-hydroxy-3-methylbut-2-enyl diphosphate. Dimethylallyl diphosphate is bound at residue His125. His125 contributes to the isopentenyl diphosphate binding site. Glu127 (proton donor) is an active-site residue. Thr165 is a (2E)-4-hydroxy-3-methylbut-2-enyl diphosphate binding site. Cys195 provides a ligand contact to [4Fe-4S] cluster. Residues Ser223, Ser224, Asn225, and Ser267 each contribute to the (2E)-4-hydroxy-3-methylbut-2-enyl diphosphate site. Dimethylallyl diphosphate contacts are provided by Ser223, Ser224, Asn225, and Ser267. Isopentenyl diphosphate-binding residues include Ser223, Ser224, Asn225, and Ser267.

This sequence belongs to the IspH family. [4Fe-4S] cluster serves as cofactor.

It catalyses the reaction isopentenyl diphosphate + 2 oxidized [2Fe-2S]-[ferredoxin] + H2O = (2E)-4-hydroxy-3-methylbut-2-enyl diphosphate + 2 reduced [2Fe-2S]-[ferredoxin] + 2 H(+). The enzyme catalyses dimethylallyl diphosphate + 2 oxidized [2Fe-2S]-[ferredoxin] + H2O = (2E)-4-hydroxy-3-methylbut-2-enyl diphosphate + 2 reduced [2Fe-2S]-[ferredoxin] + 2 H(+). Its pathway is isoprenoid biosynthesis; dimethylallyl diphosphate biosynthesis; dimethylallyl diphosphate from (2E)-4-hydroxy-3-methylbutenyl diphosphate: step 1/1. The protein operates within isoprenoid biosynthesis; isopentenyl diphosphate biosynthesis via DXP pathway; isopentenyl diphosphate from 1-deoxy-D-xylulose 5-phosphate: step 6/6. Catalyzes the conversion of 1-hydroxy-2-methyl-2-(E)-butenyl 4-diphosphate (HMBPP) into a mixture of isopentenyl diphosphate (IPP) and dimethylallyl diphosphate (DMAPP). Acts in the terminal step of the DOXP/MEP pathway for isoprenoid precursor biosynthesis. The chain is 4-hydroxy-3-methylbut-2-enyl diphosphate reductase from Chlamydia trachomatis serovar D (strain ATCC VR-885 / DSM 19411 / UW-3/Cx).